The sequence spans 367 residues: 3-dehydroquinate synthase (367 aa).

NAD(+)-binding positions include G108–D112, T132–T133, K145, and K154. Zn(2+) is bound by residues E187, H249, and H267.

Belongs to the sugar phosphate cyclases superfamily. Dehydroquinate synthase family. The cofactor is Co(2+). Zn(2+) serves as cofactor. It depends on NAD(+) as a cofactor.

The protein localises to the cytoplasm. The catalysed reaction is 7-phospho-2-dehydro-3-deoxy-D-arabino-heptonate = 3-dehydroquinate + phosphate. Its pathway is metabolic intermediate biosynthesis; chorismate biosynthesis; chorismate from D-erythrose 4-phosphate and phosphoenolpyruvate: step 2/7. In terms of biological role, catalyzes the conversion of 3-deoxy-D-arabino-heptulosonate 7-phosphate (DAHP) to dehydroquinate (DHQ). The polypeptide is 3-dehydroquinate synthase (Paracoccus denitrificans (strain Pd 1222)).